We begin with the raw amino-acid sequence, 527 residues long: Amino acid transporter heavy chain SLC3A2 (527 aa).

Residues Met1–Ala31 are disordered. Over Met1 to Arg75 the chain is Cytoplasmic. Ser2 carries the phosphoserine modification. Thr5 is modified (phosphothreonine). A compositionally biased stretch (basic and acidic residues) spans Val7–Lys21. Residue Lys42 forms a Glycyl lysine isopeptide (Lys-Gly) (interchain with G-Cter in ubiquitin) linkage. A Phosphoserine modification is found at Ser58. A Glycyl lysine isopeptide (Lys-Gly) (interchain with G-Cter in SUMO2) cross-link involves residue Lys59. A helical; Signal-anchor for type II membrane protein transmembrane segment spans residues Trp76–Val98. Topologically, residues Arg99–Ala527 are extracellular. 4 N-linked (GlcNAc...) asparagine glycosylation sites follow: Asn166, Asn249, Asn259, and Asn263. At Ser300 the chain carries Phosphoserine. N-linked (GlcNAc...) asparagine glycosylation is found at Asn318, Asn386, and Asn400. Position 421 is a phosphoserine (Ser421). Residue Asn510 is glycosylated (N-linked (GlcNAc...) asparagine).

This sequence belongs to the SLC3A transporter family. In terms of assembly, disulfide-linked heterodimer with a non-glycosylated light chain (SLC7A5, SLC7A6, SLC7A7, SLC7A8, SLC7A10 or SLC7A11). Interacts with TLCD3A/CT120 and ICAM1. Constitutively and specifically associates with beta-1 integrins (alpha-2/beta-1, alpha-3/beta-1, alpha-5/beta-1 and alpha-6/beta-1), but minimally with alpha-4/beta-1. Interacts with LAPTM4B; recruits SLC3A2 and SLC7A5 to lysosomes to promote leucine uptake into these organelles and is required for mTORC1 activation. Phosphorylation on Ser-300 and on Ser-421 by ecto-protein kinases favors heterotypic cell-cell interactions. In terms of processing, N-glycosylated; N-glycosylation is crucial for trafficking and stability of SLC3A2 to the plasma membrane. In brain expressed on capillary endothelia in cerebral cortex (at protein level). Highest expression in kidney, jejunum, ileum, colon, placenta, testis and spleen. Lower levels found in liver, lung and brain with weakest expression in heart. Expressed in retina, inner blood-retinal barrier of retina, retinal vascular endothelial cells. Also expressed in C6 glioma cells and in the retinal capillary endothelial cell line TR-iBRB2.

It localises to the apical cell membrane. The protein localises to the cell membrane. Its subcellular location is the cell junction. The protein resides in the lysosome membrane. It is found in the melanosome. It localises to the basolateral cell membrane. In terms of biological role, acts as a chaperone that facilitates biogenesis and trafficking of functional transporters heterodimers to the plasma membrane. Forms heterodimer with SLC7 family transporters (SLC7A5, SLC7A6, SLC7A7, SLC7A8, SLC7A10 and SLC7A11), a group of amino-acid antiporters. Heterodimers function as amino acids exchangers, the specificity of the substrate depending on the SLC7A subunit. Heterodimers formed by SLC3A2/SLC7A6 or SLC3A2/SLC7A7 mediate the uptake of dibasic amino acids. Heterodimer SLC3A2/SLC7A11 functions as an antiporter by mediating the exchange of extracellular anionic L-cystine and intracellular L-glutamate across the cellular plasma membrane. SLC3A2/SLC7A10 translocates small neutral L- and D-amino acids across the plasma membrane. SLC3A2/SLC75 or SLC3A2/SLC7A8 translocates neutral amino acids with broad specificity, thyroid hormones and L-DOPA. SLC3A2 is essential for plasma membrane localization, stability, and the transport activity of SLC7A5 and SLC7A8. When associated with LAPTM4B, the heterodimer SLC7A5 is recruited to lysosomes to promote leucine uptake into these organelles, and thereby mediates mTORC1 activation. Modulates integrin-related signaling and is essential for integrin-dependent cell spreading, migration and tumor progression. This is Amino acid transporter heavy chain SLC3A2 from Rattus norvegicus (Rat).